Consider the following 95-residue polypeptide: FXYD domain-containing ion transport regulator 6 (95 aa).

The N-terminal stretch at 1 to 18 (MELVLVFLCSLLAPTVLA) is a signal peptide. Residues 19 to 35 (SAAEKEKEMDPFHYDYQ) lie on the Extracellular side of the membrane. The helical transmembrane segment at 36–58 (TLRIGGLVFAVVLFSVGILLILS) threads the bilayer. Residues 59-95 (RRCKCSFNQKPRAPGDEEAQVENLITANATEPQKAEN) are Cytoplasmic-facing.

The protein belongs to the FXYD family. As to quaternary structure, regulatory subunit of the sodium/potassium-transporting ATPase which is composed of a catalytic alpha subunit, a non-catalytic beta subunit and an additional regulatory subunit. The regulatory subunit, a member of the FXYD protein family, modulates the enzymatic activity in a tissue- and isoform-specific way by changing affinities of the Na+/K+-ATPase toward Na(+), K(+) or ATP.

The protein resides in the cell membrane. Associates with and regulates the activity of the sodium/potassium-transporting ATPase (NKA) which catalyzes the hydrolysis of ATP coupled with the exchange of Na(+) and K(+) ions across the plasma membrane. Reduces the apparent affinity for intracellular Na(+) with no change in the apparent affinity for extracellular K(+). In addition to modulating NKA kinetics, may also function as a regulator of NKA localization to the plasma membrane. The chain is FXYD domain-containing ion transport regulator 6 (FXYD6) from Pongo abelii (Sumatran orangutan).